The primary structure comprises 511 residues: Myrosinase 5 (511 aa).

An N-terminal signal peptide occupies residues Met1–Ser23. 3 disulfides stabilise this stretch: Cys31–Cys450, Cys39–Cys445, and Cys230–Cys233. N-linked (GlcNAc...) asparagine glycans are attached at residues Asn46 and Asn53. Residues Gln64, His165, and Asn210 to Gln211 each bind a beta-D-glucoside. An N-linked (GlcNAc...) asparagine glycan is attached at Asn222. A beta-D-glucoside contacts are provided by Tyr351 and Glu418. Residue Glu418 is the Nucleophile of the active site. An N-linked (GlcNAc...) asparagine glycan is attached at Asn428. A beta-D-glucoside-binding positions include Trp467, Glu474–Phe475, and Phe483. Residue Asn489 is glycosylated (N-linked (GlcNAc...) asparagine).

The protein belongs to the glycosyl hydrolase 1 family. Specifically expressed in roots.

The catalysed reaction is a thioglucoside + H2O = a sugar + a thiol.. It catalyses the reaction Hydrolysis of terminal, non-reducing beta-D-glucosyl residues with release of beta-D-glucose.. Hydrolyzes sinigrin and, with lower efficiency, p-nitrophenyl beta-D-glucoside. This Arabidopsis thaliana (Mouse-ear cress) protein is Myrosinase 5.